The primary structure comprises 218 residues: Major NAD(P)H-flavin oxidoreductase (218 aa).

FMN is bound by residues 12-16 (RYTSK) and N73. 154-159 (LARLNI) is an NAD(+) binding site. FMN contacts are provided by residues 165–166 (EG) and 206–208 (KSR).

Belongs to the nitroreductase family. In terms of assembly, homodimer. Requires FMN as cofactor.

Functionally, involved in bioluminescence. It is a good supplier of reduced flavin mononucleotide (FMNH2) to the bioluminescence reaction. Major FMN reductase. It is capable of using both NADH and NADPH as electron donors. As electron acceptor, FMN is the most effective, FAD is considerably effective, and riboflavin is the least effective. The polypeptide is Major NAD(P)H-flavin oxidoreductase (Aliivibrio fischeri (Vibrio fischeri)).